The primary structure comprises 388 residues: Chorismate synthase (388 aa).

Residues arginine 40 and arginine 46 each contribute to the NADP(+) site. Residues 131–133 (RSS), 252–253 (NA), glycine 296, 311–315 (KPIPT), and arginine 337 contribute to the FMN site.

It belongs to the chorismate synthase family. In terms of assembly, homotetramer. FMNH2 serves as cofactor.

It carries out the reaction 5-O-(1-carboxyvinyl)-3-phosphoshikimate = chorismate + phosphate. It functions in the pathway metabolic intermediate biosynthesis; chorismate biosynthesis; chorismate from D-erythrose 4-phosphate and phosphoenolpyruvate: step 7/7. In terms of biological role, catalyzes the anti-1,4-elimination of the C-3 phosphate and the C-6 proR hydrogen from 5-enolpyruvylshikimate-3-phosphate (EPSP) to yield chorismate, which is the branch point compound that serves as the starting substrate for the three terminal pathways of aromatic amino acid biosynthesis. This reaction introduces a second double bond into the aromatic ring system. In Limosilactobacillus fermentum (strain NBRC 3956 / LMG 18251) (Lactobacillus fermentum), this protein is Chorismate synthase.